The chain runs to 68 residues: Sec-independent protein translocase protein TatA (68 aa).

A helical membrane pass occupies residues 1 to 21 (MGSFSIWHWLIVLAVVLLLFG). The disordered stretch occupies residues 48 to 68 (AAAADKSIDGKTVDHKSDEVR). The segment covering 53–68 (KSIDGKTVDHKSDEVR) has biased composition (basic and acidic residues).

This sequence belongs to the TatA/E family. The Tat system comprises two distinct complexes: a TatABC complex, containing multiple copies of TatA, TatB and TatC subunits, and a separate TatA complex, containing only TatA subunits. Substrates initially bind to the TatABC complex, which probably triggers association of the separate TatA complex to form the active translocon.

It localises to the cell inner membrane. Its function is as follows. Part of the twin-arginine translocation (Tat) system that transports large folded proteins containing a characteristic twin-arginine motif in their signal peptide across membranes. TatA could form the protein-conducting channel of the Tat system. This chain is Sec-independent protein translocase protein TatA, found in Sinorhizobium medicae (strain WSM419) (Ensifer medicae).